Reading from the N-terminus, the 716-residue chain is Phenylalanine/tyrosine ammonia-lyase (716 aa).

Tyrosine 110 acts as the Proton donor/acceptor in catalysis. Residues 211–213 (ASG) constitute a cross-link (5-imidazolinone (Ala-Gly)). Serine 212 carries the post-translational modification 2,3-didehydroalanine (Ser). The (E)-cinnamate site is built by asparagine 270, glutamine 360, arginine 366, asparagine 397, lysine 468, glutamate 496, and asparagine 499.

Belongs to the PAL/histidase family. As to quaternary structure, homotetramer. Dimer of dimers. In terms of processing, contains an active site 4-methylidene-imidazol-5-one (MIO), which is formed autocatalytically by cyclization and dehydration of residues Ala-Ser-Gly.

It localises to the cytoplasm. The enzyme catalyses L-phenylalanine = (E)-cinnamate + NH4(+). It carries out the reaction L-tyrosine = (E)-4-coumarate + NH4(+). Its pathway is phenylpropanoid metabolism; trans-cinnamate biosynthesis; trans-cinnamate from L-phenylalanine: step 1/1. In terms of biological role, catalyzes the non-oxidative deamination of L-phenylalanine and L-tyrosine to form trans-cinnamic acid and p-coumaric acid respectively with similar efficiencies. Facilitates the commitment step in phenylpropanoid pathways that produce secondary metabolites such as lignins, coumarins and flavonoids. This is Phenylalanine/tyrosine ammonia-lyase (PAL) from Rhodotorula toruloides (Yeast).